Here is a 201-residue protein sequence, read N- to C-terminus: Glutathione S-transferase GstA (201 aa).

The region spanning 1-81 (MKLFYKPGAC…YLADSVPDRQ (81 aa)) is the GST N-terminal domain. Residues Cys10, Lys35, Val52, 65–66 (EG), Asn99, and 103–106 (TELH) each bind glutathione. The region spanning 87 to 201 (NSISRYKTIE…QDALSAEGLK (115 aa)) is the GST C-terminal domain.

The protein belongs to the GST superfamily. Beta family. As to quaternary structure, homodimer.

The protein resides in the cytoplasm. It carries out the reaction RX + glutathione = an S-substituted glutathione + a halide anion + H(+). Conjugation of reduced glutathione to a wide number of exogenous and endogenous hydrophobic electrophiles. The chain is Glutathione S-transferase GstA (gstA) from Escherichia coli O157:H7.